Reading from the N-terminus, the 206-residue chain is Platelet glycoprotein Ib beta chain (206 aa).

The first 26 residues, 1–26 (MGSRPRGALSLLLLLLAPPSRPASGC), serve as a signal peptide directing secretion. Intrachain disulfides connect Cys-26–Cys-32 and Cys-30–Cys-39. The LRRNT domain occupies 27–55 (PAPCRCSETRVDCGRRGLTWASLPAAFPP). Topologically, residues 27–150 (PAPCRCSETR…CAPGLLCWGA (124 aa)) are extracellular. An LRR repeat occupies 60-83 (LVLTDNNLTALPPGLLDTLPALRR). Residues 89 to 143 (NPWRCDCRLLPLRAWLAGRPEREFYRDLRCVAPLALRGRLLPYVAEDELRAACAP) enclose the LRRCT domain. Disulfide bonds link Cys-93/Cys-118 and Cys-95/Cys-141. A helical membrane pass occupies residues 151–171 (LVAQLALLVLGLLHALLLALL). Topologically, residues 172-206 (LSRLRRLRAQARARSTREFSLTAPLVAESAGGGAS) are cytoplasmic. Ser-186 carries the post-translational modification Phosphoserine. Position 191 is a phosphoserine; by PKA (Ser-191). Phosphothreonine is present on Thr-193. Ser-200 bears the Phosphoserine mark.

As to quaternary structure, two GP-Ib beta are disulfide-linked to one GP-Ib alpha. GP-IX is complexed with the GP-Ib heterodimer via a non covalent linkage. Interacts with TRAF4.

The protein resides in the membrane. In terms of biological role, gp-Ib, a surface membrane protein of platelets, participates in the formation of platelet plugs by binding to von Willebrand factor, which is already bound to the subendothelium. The chain is Platelet glycoprotein Ib beta chain (Gp1bb) from Rattus norvegicus (Rat).